Here is a 255-residue protein sequence, read N- to C-terminus: Electron transfer flavoprotein subunit beta (255 aa).

Ala-2 bears the N-acetylalanine mark. AMP is bound by residues Ala-9, 39–42, Cys-66, and 123–134; these read NPFC and GKQAIDDDCNQT. The segment at 183–205 is recognition loop; sequence ADLRLNEPRYATLPNIMKAKKKK. Lys-200 bears the N6,N6,N6-trimethyllysine; by ETFBKMT; alternate mark. Lys-200 carries the post-translational modification N6-acetyllysine; alternate. Lys-200 bears the N6-methyllysine; alternate mark. The residue at position 203 (Lys-203) is an N6,N6,N6-trimethyllysine; by ETFBKMT. Residue Lys-210 is modified to N6-acetyllysine; alternate. Lys-210 bears the N6-succinyllysine; alternate mark. Phosphoserine is present on residues Ser-223 and Ser-226. An N6-acetyllysine modification is found at Lys-238. Lys-248 bears the N6-acetyllysine; alternate mark. Lys-248 carries the N6-succinyllysine; alternate modification.

Belongs to the ETF beta-subunit/FixA family. As to quaternary structure, heterodimer composed of ETFA and ETFB. Identified in a complex that contains ETFA, ETFB and ETFRF1. Interacts with ACADM. Methylated. Trimethylation at Lys-200 and Lys-203 may negatively regulate the activity in electron transfer from acyl-CoA dehydrogenases.

Its subcellular location is the mitochondrion matrix. Functionally, heterodimeric electron transfer flavoprotein that accepts electrons from several mitochondrial dehydrogenases, including acyl-CoA dehydrogenases, glutaryl-CoA and sarcosine dehydrogenase. It transfers the electrons to the main mitochondrial respiratory chain via ETF-ubiquinone oxidoreductase. Required for normal mitochondrial fatty acid oxidation and normal amino acid metabolism. ETFB binds an AMP molecule that probably has a purely structural role. In Mus musculus (Mouse), this protein is Electron transfer flavoprotein subunit beta.